A 141-amino-acid polypeptide reads, in one-letter code: Hemoglobin subunit alpha (141 aa).

The 141-residue stretch at 1 to 141 (VLSDKDKTNV…VSTVLTSKYR (141 aa)) folds into the Globin domain. A Phosphoserine modification is found at S3. K7 is modified (N6-succinyllysine). T8 is subject to Phosphothreonine. K11 bears the N6-succinyllysine mark. At K16 the chain carries N6-acetyllysine; alternate. At K16 the chain carries N6-succinyllysine; alternate. Residue Y24 is modified to Phosphotyrosine. S35 carries the post-translational modification Phosphoserine. K40 carries the N6-succinyllysine modification. At S49 the chain carries Phosphoserine. H58 lines the O2 pocket. Position 87 (H87) interacts with heme b. Residue S102 is modified to Phosphoserine. T108 carries the post-translational modification Phosphothreonine. S124 bears the Phosphoserine mark. Phosphothreonine is present on residues T134 and T137. S138 bears the Phosphoserine mark.

The protein belongs to the globin family. In terms of assembly, heterotetramer of two alpha chains and two beta chains. As to expression, red blood cells.

Its function is as follows. Involved in oxygen transport from the lung to the various peripheral tissues. In terms of biological role, hemopressin acts as an antagonist peptide of the cannabinoid receptor CNR1. Hemopressin-binding efficiently blocks cannabinoid receptor CNR1 and subsequent signaling. This is Hemoglobin subunit alpha (HBA) from Elephas maximus (Indian elephant).